The primary structure comprises 321 residues: Glucokinase (321 aa).

Ala8–Thr13 contacts ATP.

Belongs to the bacterial glucokinase family.

The protein resides in the cytoplasm. The enzyme catalyses D-glucose + ATP = D-glucose 6-phosphate + ADP + H(+). This is Glucokinase from Photorhabdus laumondii subsp. laumondii (strain DSM 15139 / CIP 105565 / TT01) (Photorhabdus luminescens subsp. laumondii).